The primary structure comprises 511 residues: Immunoglobulin-binding protein EibD (511 aa).

The signal sequence occupies residues methionine 1 to alanine 26. A surface exposed passenger domain region spans residues glutamine 27 to threonine 417. Over glutamine 27–lysine 460 the chain is Extracellular. Residues aspartate 161–glycine 287 form a head domain region. The neck stretch occupies residues threonine 288 to alanine 303. The interval alanine 304–arginine 349 is right-handed coiled-coil (RHcc). Residues alanine 304–arginine 349 are a coiled coil. The interval glutamate 329–glutamate 344 is required to bind IgA. The interval threonine 350–glycine 375 is saddle domain. Residues leucine 376–arginine 441 are a coiled coil. The segment at leucine 376–arginine 441 is left-handed coiled-coil (LHcc). The interval aspartate 384–leucine 418 is required to bind IgG. The outer membrane translocation of the passenger domain stretch occupies residues leucine 418–lysine 460. Transmembrane regions (beta stranded) follow at residues phenylalanine 461 to serine 471, glutamine 474 to asparagine 485, threonine 488 to serine 497, and alanine 501 to phenylalanine 511. The segment at phenylalanine 461–phenylalanine 511 is translocator domain.

It belongs to the autotransporter-2 (AT-2) (TC 1.B.40) family. Eib subfamily. As to quaternary structure, homotrimer; can probably form mixed heterotrimers in vivo. Will form mixed heterotrimers with EibA or EibC; these are correctly located in the outer membrane and bind IgG Fc, although less well than homotrimers. In denaturing gels runs as a band of about 210 kDa. Binds the Fc portion of immunoglobulins; binds more than 1 Fc per subunit, can be modeled to bind 3 Fc per trimer.

It is found in the cell surface. The protein localises to the cell outer membrane. Functionally, binds (in a non-immune fashion) to the Fc portion of human IgA and IgG; binding occurs on the cell surface. Confers the ability to survive exposure to human serum exposure. Binds to the Fc portion of human IgG, IgA and to whole mouse antibodies also via Fc. Upon overexpression cells acquire an extra cell surface layer that forms a zipper-like contact between cells; cells autoagglutinate and form biofilm more readily, suggesting it may play a role in defense against a host. The sequence is that of Immunoglobulin-binding protein EibD from Escherichia coli.